A 291-amino-acid chain; its full sequence is Kynurenine formamidase (291 aa).

The HGGXW signature appears at 33–37 (HGGAW). The active-site Nucleophile is Ser107. Residues Asp242 and His280 contribute to the active site.

It belongs to the kynurenine formamidase family. In terms of assembly, homodimer.

The enzyme catalyses N-formyl-L-kynurenine + H2O = L-kynurenine + formate + H(+). It functions in the pathway amino-acid degradation; L-tryptophan degradation via kynurenine pathway; L-kynurenine from L-tryptophan: step 2/2. Catalyzes the hydrolysis of N-formyl-L-kynurenine to L-kynurenine, the second step in the kynurenine pathway of tryptophan degradation. Kynurenine may be further oxidized to nicotinic acid, NAD(H) and NADP(H). Required for elimination of toxic metabolites. The sequence is that of Kynurenine formamidase from Debaryomyces hansenii (strain ATCC 36239 / CBS 767 / BCRC 21394 / JCM 1990 / NBRC 0083 / IGC 2968) (Yeast).